A 265-amino-acid polypeptide reads, in one-letter code: Ubiquinone biosynthesis protein COQ4 homolog, mitochondrial (265 aa).

The transit peptide at 1–30 (MATLLRPVLRRLCGLPGLQRPAAEMPLRAR) directs the protein to the mitochondrion. Residue serine 108 is modified to Phosphoserine. Zn(2+) is bound by residues histidine 163, aspartate 164, histidine 167, and glutamate 179.

Belongs to the COQ4 family. In terms of assembly, component of a multi-subunit COQ enzyme complex, composed of at least COQ3, COQ4, COQ5, COQ6, COQ7 and COQ9. Zn(2+) serves as cofactor. Expressed ubiquitously, but at high levels in liver, lung and pancreas.

Its subcellular location is the mitochondrion inner membrane. The enzyme catalyses 4-hydroxy-3-methoxy-5-(all-trans-decaprenyl)benzoate + H(+) = 2-methoxy-6-(all-trans-decaprenyl)phenol + CO2. The protein operates within cofactor biosynthesis; ubiquinone biosynthesis. Lyase that catalyzes the C1-decarboxylation of 4-hydroxy-3-methoxy-5-(all-trans-decaprenyl)benzoic acid into 2-methoxy-6-(all-trans-decaprenyl)phenol during ubiquinone biosynthesis. The sequence is that of Ubiquinone biosynthesis protein COQ4 homolog, mitochondrial from Homo sapiens (Human).